A 200-amino-acid polypeptide reads, in one-letter code: Imidazole glycerol phosphate synthase subunit HisH (200 aa).

One can recognise a Glutamine amidotransferase type-1 domain in the interval 2 to 200 (KVAIVEYGVG…LGEVLTGASR (199 aa)). Residue Cys-79 is the Nucleophile of the active site. Catalysis depends on residues His-179 and Glu-181.

In terms of assembly, heterodimer of HisH and HisF.

Its subcellular location is the cytoplasm. It carries out the reaction 5-[(5-phospho-1-deoxy-D-ribulos-1-ylimino)methylamino]-1-(5-phospho-beta-D-ribosyl)imidazole-4-carboxamide + L-glutamine = D-erythro-1-(imidazol-4-yl)glycerol 3-phosphate + 5-amino-1-(5-phospho-beta-D-ribosyl)imidazole-4-carboxamide + L-glutamate + H(+). The catalysed reaction is L-glutamine + H2O = L-glutamate + NH4(+). It participates in amino-acid biosynthesis; L-histidine biosynthesis; L-histidine from 5-phospho-alpha-D-ribose 1-diphosphate: step 5/9. Functionally, IGPS catalyzes the conversion of PRFAR and glutamine to IGP, AICAR and glutamate. The HisH subunit catalyzes the hydrolysis of glutamine to glutamate and ammonia as part of the synthesis of IGP and AICAR. The resulting ammonia molecule is channeled to the active site of HisF. The polypeptide is Imidazole glycerol phosphate synthase subunit HisH (Methanopyrus kandleri (strain AV19 / DSM 6324 / JCM 9639 / NBRC 100938)).